The following is a 725-amino-acid chain: Aminopeptidase RNPEPL1 (725 aa).

Position 326-330 (326-330) interacts with substrate; the sequence is VAMEN. Histidine 353 is a binding site for Zn(2+). Glutamate 354 (proton acceptor) is an active-site residue. Zn(2+) contacts are provided by histidine 357 and glutamate 376. The tract at residues 676–699 is disordered; it reads GLGSSTEPASEPSTELGKAEADTD. Positions 679–690 are enriched in low complexity; that stretch reads SSTEPASEPSTE.

Belongs to the peptidase M1 family. Zn(2+) is required as a cofactor. Ubiquitously expressed. Expressed at relatively higher levels in heart and skeletal muscle.

It carries out the reaction Release of N-terminal amino acids, preferentially methionine, from peptides and arylamides.. Its activity is regulated as follows. Inhibited by calcium but not affected by chloride ions. Inhibited by amastatin and to a lower extent by bestatin. Weakly inhibited by puromycin. In terms of biological role, broad specificity aminopeptidase which preferentially hydrolyzes an N-terminal methionine, citrulline or glutamine. This is Aminopeptidase RNPEPL1 from Homo sapiens (Human).